A 195-amino-acid polypeptide reads, in one-letter code: Protein GrpE (195 aa).

This sequence belongs to the GrpE family. As to quaternary structure, homodimer.

The protein localises to the cytoplasm. Functionally, participates actively in the response to hyperosmotic and heat shock by preventing the aggregation of stress-denatured proteins, in association with DnaK and GrpE. It is the nucleotide exchange factor for DnaK and may function as a thermosensor. Unfolded proteins bind initially to DnaJ; upon interaction with the DnaJ-bound protein, DnaK hydrolyzes its bound ATP, resulting in the formation of a stable complex. GrpE releases ADP from DnaK; ATP binding to DnaK triggers the release of the substrate protein, thus completing the reaction cycle. Several rounds of ATP-dependent interactions between DnaJ, DnaK and GrpE are required for fully efficient folding. This is Protein GrpE from Francisella tularensis subsp. novicida (strain U112).